Here is a 3387-residue protein sequence, read N- to C-terminus: MNQRKKVVRPPFNMLKRERNRVSTPQGLVKRFSTGLFSGKGPLRMVLAFITFLRVLSIPPTAGILKRWGQLKKNKAIKILIGFRKEIGRMLNILNGRKRSTMTLLCLIPTVMAFHLSTRDGEPLMIVAKHERGRPLLFKTTEGINKCTLIAMDLGEMCEDTVTYKCPLLVNTEPEDIDCWCNLTSTWVMYGTCTQSGERRREKRSVALTPHSGMGLETRAETWMSSEGAWKHAQRVESWILRNPGFALLAGFMAYMIGQTGIQRTVFFVLMMLVAPSYGMRCVGVGNRDFVEGVSGGAWVDLVLEHGGCVTTMAQGKPTLDFELTKTTAKEVALLRTYCIEASISNITTATRCPTQGEPYLKEEQDQQYICRRDVVDRGWGNGCGLFGKGGVVTCAKFSCSGKITGNLVQIENLEYTVVVTVHNGDTHAVGNDTSNHGVTATITPRSPSVEVKLPDYGELTLDCEPRSGIDFNEMILMEMKKKTWLVHKQWFLDLPLPWTAGADTSEVHWNYKERMVTFKVPHAKRQDVTVLGSQEGAMHSALAGATEVDSGDGNHMFAGHLKCKVRMEKLRIKGMSYTMCSGKFSIDKEMAETQHGTTVVKVKYEGAGAPCKVPIEIRDVNKEKVVGRVISSTPLAENTNSVTNIELEPPFGDSYIVIGVGNSALTLHWFRKGSSIGKMFESTYRGAKRMAILGETAWDFGSVGGLFTSLGKAVHQVFGSVYTTMFGGVSWMVRILIGFLVLWIGTNSRNTSMAMTCIAVGGITLFLGFTVQADMGCVVSWSGKELKCGSGIFVADNVHTWTEQYKFQPESPARLASAILNAHKDGVCGIRSTTRLENVMWKQITNELNYVLWEGGHDLTVVAGDVKGVLTKGKRALTPPVNDLKYSWKTWGKAKIFTPEARNSTFLIDGPDTSECPNERRAWNFLEVEDYGFGMFTTNIWMKFREGSSEVCDHRLMSAAIKDQKAVHADMGYWIESSKNQTWQIEKASLIEVKTCLWPKTHTLWSNGVLESQMLIPKSYAGPFSQHNYRQGYATQTVGPWHLGKLEIDFGECPGTTVTIQEDCDHRGPSLRTTTASGKLVTQWCCRSCTMPPLRFLGEDGCWYGMEIRPLSEKEENMVKSQVTAGQGTSETFSMGLLCLTLFMEECLRRRVTRKHMILVVVITLCAIILGGLTWMDLLRALIMLGDTMSGRIGGQVHLAIMAVFKMSPGYVLGVFLRKLTSRETALMVIGMAMTTVLSIPHDLMELIDGISLGLILLKIVTQFDNTQVGTLALSLTFIRSTMPLVMAWRTIMAVLFVVTLIPLCRTSCLQKQSHWVEITALILGAQALPVYLMTLMKGASRRSWPLNEGIMAVGLVSLLGSALLKNDVPLAGPMVAGGLLLAAYVMSGSSADLSLEKAANVQWDEMADITGSSPIIEVKQDEDGSFSIRDVEETNMITLLVKLALITVSGLYPLAIPVTMTLWYMWQVKTQRSGALWDVPSPAATQKAALSEGVYRIMQRGLFGKTQVGVGIHIEGVFHTMWHVTRGSVICHETGRLEPSWADVRNDMISYGGGWRLGDKWDKEEDVQVLAIEPGKNPKHVQTKPGLFKTLTGEIGAVTLDFKPGTSGSPIINRKGKVIGLYGNGVVTKSGDYVSAITQAERIGEPDYEVDEDIFRKKRLTIMDLHPGAGKTKRILPSIVREALKRRLRTLILAPTRVVAAEMEEALRGLPIRYQTPAVKSEHTGREIVDLMCHATFTTRLLSSTRVPNYNLIVMDEAHFTDPSSVAARGYISTRVEMGEAAAIFMTATPPGTTDPFPQSNSPIEDIEREIPERSWNTGFDWITDYQGKTVWFVPSIKAGNDIANCLRKSGKKVIQLSRKTFDTEYPKTKLTDWDFVVTTDISEMGANFRAGRVIDPRRCLKPVILPDGPERVILAGPIPVTPASAAQRRGRIGRNPAQEDDQYVFSGDPLKNDEDHAHWTEAKMLLDNIYTPEGIIPTLFGPEREKTQAIDGEFRLRGEQRKTFVELMRRGDLPVWLSYKVASAGISYKDREWCFTGERNNQILEENMEVEIWTREGEKKKLRPKWLDARVYADPMALKDFKEFASGRKSITLDILTEIASLPTYLSSRAKLALDNIVMLHTTEKGGRAYQHALNELPESLETLMLVALLGAMTAGTFLFFMQGKGIGKLSMGLITIAVASGLLWVAELQPQWIAASIILEFFLMVLLIPEPEKQRTPQDNQLIYVILTILTIIGLIAANEMGLIEKTKTDFGFYQVKTETTILDVDLRPASAWTLYAVATTILTPMLRHTIENTSANLSLAAIANQAAVLMGLGKGWPLHRVDLGVPLLAMGCYSQVNPTTLTASLVMLLVHYAIIGPGLQAKATREAQKRTAAGIMKNPTVDGITVIDLEPISYDPKFEKQLGQVMLLVLCAGQLLLMRTTWAFCEVLTLATGPILTLWEGNPGRFWNTTIAVSTANIFRGSYLAGAGLAFSLIKNAQTPRRGTGTTGETLGEKWKRQLNSLDRKEFEEYKRSGIIEVDRTEAKSALKDGSKIKHAVSRGSSKIRWIVERGMVKPKGKVVDLGCGRGGWSYYMATLKNVTEVRGFTKGGPGHEEPIPMATYGWNLVKLHSGVDVFYKPTEQVDTLLCDIGESSSNPTIEEGRTLRVLKMVEPWLSSKPEFCIKVLNPYMPTVIEELEKLQRKHGGNLVRCPLSRNSTHEMYWVSGASGNIVSSVNTTSKMLLNRFTTRHRKPTYEKDVDLGAGTRSVSTETEKPDMTIIGRRLQRLQEEHKETWHYDQENPYRTWAYHGSYEAPSTGSASSMVNGVVKLLTKPWDVIPMVTQLAMTDTTPFGQQRVFKEKVDTRTPQPKPGTRMVMTTTANWLWTLLGKKKNPRLCTREEFISKVRSNAAIGAVFQEEQGWTSASEAVNDSRFWELVDKERALHQEGRCESCVYNMMGKREKKLGEFGRAKGSRAIWYMWLGARFLEFEALGFLNEDHWFGRENSWSGVEGEGLHRLGYILEDIDKKDGDLMYADDTAGWDTRITEDDLQNEELITEQMAPHHKILAKAIFKLTYQNKVVKVLRPTPRGAVMDIISRKDQRGSGQVGTYGLNTFTNMEVQLIRQMEAEGVITQDDMQNPKGLKERVEKWLKECGVDRLKRMAISGDDCVVKPLDERFSTSLLFLNDMGKVRKDIPQWEPSKGWKNWQEVPFCSHHFHKIFMKDGRSLVVPCRNQDELIGRARISQGAGWSLRETACLGKAYAQMWSLMYFHRRDLRLASMAICSAVPTEWFPTSRTTWSIHAHHQWMTTEDMLKVWNRVWIEDNPNMTDKTPVHSWEDVPYLGKREDLWCGSLIGLSSRATWAKNIHTAITQVRNLIGKEEYVDYMPVMKRYSAPSESEGVL.

Over 1–100 the chain is Cytoplasmic; that stretch reads MNQRKKVVRP…LNILNGRKRS (100 aa). Residues 36-71 are hydrophobic; homodimerization of capsid protein C; the sequence is LFSGKGPLRMVLAFITFLRVLSIPPTAGILKRWGQL. The propeptide at 100 to 113 is ER anchor for the capsid protein C, removed in mature form by serine protease NS3; the sequence is STMTLLCLIPTVMA. The helical transmembrane segment at 101–117 threads the bilayer; that stretch reads TMTLLCLIPTVMAFHLS. The Extracellular segment spans residues 118-237; it reads TRDGEPLMIV…GAWKHAQRVE (120 aa). A glycan (N-linked (GlcNAc...) asparagine; by host) is linked at Asn182. The helical transmembrane segment at 238–258 threads the bilayer; it reads SWILRNPGFALLAGFMAYMIG. Residues 259-265 are Cytoplasmic-facing; that stretch reads QTGIQRT. Residues 266-279 traverse the membrane as a helical segment; sequence VFFVLMMLVAPSYG. Residues 280–723 are Extracellular-facing; the sequence is MRCVGVGNRD…AVHQVFGSVY (444 aa). Intrachain disulfides connect Cys282-Cys309, Cys339-Cys400, Cys353-Cys384, and Cys371-Cys395. Residue Asn346 is glycosylated (N-linked (GlcNAc...) asparagine; by host). Residues 377–390 are fusion peptide; it reads DRGWGNGCGLFGKG. The N-linked (GlcNAc...) asparagine; by host glycan is linked to Asn432. 2 disulfides stabilise this stretch: Cys464–Cys564 and Cys581–Cys612. The helical transmembrane segment at 724–744 threads the bilayer; the sequence is TTMFGGVSWMVRILIGFLVLW. At 745–750 the chain is on the cytoplasmic side; the sequence is IGTNSR. Residues 751 to 771 form a helical membrane-spanning segment; the sequence is NTSMAMTCIAVGGITLFLGFT. The Extracellular portion of the chain corresponds to 772-1194; it reads VQADMGCVVS…MLGDTMSGRI (423 aa). 6 disulfides stabilise this stretch: Cys778/Cys789, Cys829/Cys917, Cys953/Cys997, Cys1054/Cys1103, Cys1065/Cys1087, and Cys1086/Cys1090. Residues Asn904 and Asn981 are each glycosylated (N-linked (GlcNAc...) asparagine; by host). A helical membrane pass occupies residues 1195–1218; sequence GGQVHLAIMAVFKMSPGYVLGVFL. The Lumenal portion of the chain corresponds to 1219-1224; sequence RKLTSR. The chain crosses the membrane as a helical span at residues 1225–1243; it reads ETALMVIGMAMTTVLSIPH. Topologically, residues 1244 to 1267 are cytoplasmic; it reads DLMELIDGISLGLILLKIVTQFDN. The helical transmembrane segment at 1268-1288 threads the bilayer; sequence TQVGTLALSLTFIRSTMPLVM. A topological domain (lumenal) is located at residue Ala1289. The helical transmembrane segment at 1290–1308 threads the bilayer; sequence WRTIMAVLFVVTLIPLCRT. Residues 1309 to 1316 are Lumenal-facing; it reads SCLQKQSH. Residues 1317–1337 form a helical membrane-spanning segment; that stretch reads WVEITALILGAQALPVYLMTL. Topologically, residues 1338 to 1345 are cytoplasmic; the sequence is MKGASRRS. The chain crosses the membrane as a helical span at residues 1346 to 1366; the sequence is WPLNEGIMAVGLVSLLGSALL. At 1367 to 1369 the chain is on the lumenal side; sequence KND. A helical membrane pass occupies residues 1370–1390; sequence VPLAGPMVAGGLLLAAYVMSG. At 1391–1437 the chain is on the cytoplasmic side; the sequence is SSADLSLEKAANVQWDEMADITGSSPIIEVKQDEDGSFSIRDVEETN. Positions 1397 to 1436 are interacts with and activates NS3 protease; it reads LEKAANVQWDEMADITGSSPIIEVKQDEDGSFSIRDVEET. Positions 1438–1458 form an intramembrane region, helical; that stretch reads MITLLVKLALITVSGLYPLAI. The Cytoplasmic portion of the chain corresponds to 1459–2143; the sequence is PVTMTLWYMW…QHALNELPES (685 aa). In terms of domain architecture, Peptidase S7 spans 1475 to 1652; the sequence is SGALWDVPSP…ERIGEPDYEV (178 aa). Active-site charge relay system; for serine protease NS3 activity residues include His1525, Asp1549, and Ser1609. The Helicase ATP-binding domain maps to 1654–1810; sequence EDIFRKKRLT…QSNSPIEDIE (157 aa). An important for RNA-binding region spans residues 1658–1661; sequence RKKR. 1667-1674 lines the ATP pocket; it reads LHPGAGKT. Positions 1758–1761 match the DEAH box motif; it reads DEAH. A Helicase C-terminal domain is found at 1820 to 1987; the sequence is TGFDWITDYQ…IIPTLFGPER (168 aa). N6-acetyllysine; by host is present on Lys1862. Residues 2144–2164 form a helical membrane-spanning segment; it reads LETLMLVALLGAMTAGTFLFF. Residues 2165–2169 lie on the Lumenal side of the membrane; that stretch reads MQGKG. The helical intramembrane region spans 2170–2190; sequence IGKLSMGLITIAVASGLLWVA. A topological domain (lumenal) is located at residue Glu2191. Residues 2192 to 2212 form a helical membrane-spanning segment; it reads LQPQWIAASIILEFFLMVLLI. At 2213 to 2225 the chain is on the cytoplasmic side; it reads PEPEKQRTPQDNQ. The chain crosses the membrane as a helical span at residues 2226 to 2246; sequence LIYVILTILTIIGLIAANEMG. Residues 2247 to 2270 are Lumenal-facing; it reads LIEKTKTDFGFYQVKTETTILDVD. An intramembrane region (helical) is located at residues 2271–2291; the sequence is LRPASAWTLYAVATTILTPML. Residues 2292–2301 are Lumenal-facing; it reads RHTIENTSAN. 2 N-linked (GlcNAc...) asparagine; by host glycosylation sites follow: Asn2297 and Asn2301. Positions 2302 to 2322 form an intramembrane region, helical; the sequence is LSLAAIANQAAVLMGLGKGWP. Topologically, residues 2323-2343 are lumenal; the sequence is LHRVDLGVPLLAMGCYSQVNP. A helical membrane pass occupies residues 2344–2364; sequence TTLTASLVMLLVHYAIIGPGL. Residues 2365 to 2409 lie on the Cytoplasmic side of the membrane; it reads QAKATREAQKRTAAGIMKNPTVDGITVIDLEPISYDPKFEKQLGQ. Residues 2410-2430 traverse the membrane as a helical segment; the sequence is VMLLVLCAGQLLLMRTTWAFC. The Lumenal segment spans residues 2431 to 2455; sequence EVLTLATGPILTLWEGNPGRFWNTT. A glycan (N-linked (GlcNAc...) asparagine; by host) is linked at Asn2453. Residues 2456 to 2476 traverse the membrane as a helical segment; it reads IAVSTANIFRGSYLAGAGLAF. Residues 2477–3387 lie on the Cytoplasmic side of the membrane; the sequence is SLIKNAQTPR…SAPSESEGVL (911 aa). The mRNA cap 0-1 NS5-type MT domain maps to 2489 to 2751; the sequence is TGTTGETLGE…DVDLGAGTRS (263 aa). Ser2543 lines the S-adenosyl-L-methionine pocket. Phosphoserine is present on Ser2543. Lys2548 acts as the For 2'-O-MTase activity in catalysis. Residues 2564–2567 carry the SUMO-interacting motif motif; that stretch reads VVDL. The S-adenosyl-L-methionine site is built by Gly2573, Trp2574, Thr2591, Lys2592, Asp2618, and Val2619. Asp2633 acts as the For 2'-O-MTase activity in catalysis. Ile2634 serves as a coordination point for S-adenosyl-L-methionine. Residues Lys2668 and Glu2704 each act as for 2'-O-MTase activity in the active site. S-adenosyl-L-methionine is bound at residue Tyr2706. Residues Glu2925, His2929, Cys2934, and Cys2937 each coordinate Zn(2+). In terms of domain architecture, RdRp catalytic spans 3016-3166; that stretch reads LMYADDTAGW…PLDERFSTSL (151 aa). Residues His3200, Cys3216, and Cys3335 each contribute to the Zn(2+) site.

It in the N-terminal section; belongs to the class I-like SAM-binding methyltransferase superfamily. mRNA cap 0-1 NS5-type methyltransferase family. In terms of assembly, homodimer. Interacts (via N-terminus) with host EXOC1 (via C-terminus); this interaction results in EXOC1 degradation through the proteasome degradation pathway. As to quaternary structure, forms heterodimers with envelope protein E in the endoplasmic reticulum and Golgi. Homodimer; in the endoplasmic reticulum and Golgi. Interacts with protein prM. Interacts with non-structural protein 1. In terms of assembly, homodimer; Homohexamer when secreted. Interacts with envelope protein E. As to quaternary structure, interacts (via N-terminus) with serine protease NS3. Forms a heterodimer with serine protease NS3. May form homooligomers. In terms of assembly, forms a heterodimer with NS2B. Interacts with NS4B. Interacts with unphosphorylated RNA-directed RNA polymerase NS5; this interaction stimulates RNA-directed RNA polymerase NS5 guanylyltransferase activity. Interacts with host SHFL. As to quaternary structure, interacts with host MAVS; this interaction inhibits the synthesis of IFN-beta. Interacts with host SHFL. Interacts with host AUP1; the interaction occurs in the presence of Dengue virus NS4B and induces lipophagy which facilitates production of virus progeny particles. Interacts with serine protease NS3. In terms of assembly, homodimer. Interacts with host STAT2; this interaction inhibits the phosphorylation of the latter, and, when all viral proteins are present (polyprotein), targets STAT2 for degradation. Interacts with serine protease NS3. Interacts with host PAF1 complex; the interaction may prevent the recruitment of the PAF1 complex to interferon-responsive genes, and thus reduces the immune response. Post-translationally, specific enzymatic cleavages in vivo yield mature proteins. Cleavages in the lumen of endoplasmic reticulum are performed by host signal peptidase, whereas cleavages in the cytoplasmic side are performed by serine protease NS3. Signal cleavage at the 2K-4B site requires a prior NS3 protease-mediated cleavage at the 4A-2K site. Cleaved in post-Golgi vesicles by a host furin, releasing the mature small envelope protein M, and peptide pr. This cleavage is incomplete as up to 30% of viral particles still carry uncleaved prM. In terms of processing, N-glycosylated. Post-translationally, N-glycosylated. The excreted form is glycosylated and this is required for efficient secretion of the protein from infected cells. Acetylated by host KAT5. Acetylation modulates NS3 RNA-binding and unwinding activities and plays an important positive role for viral replication. In terms of processing, sumoylation of RNA-directed RNA polymerase NS5 increases NS5 protein stability allowing proper viral RNA replication. Post-translationally, phosphorylated on serines residues. This phosphorylation may trigger NS5 nuclear localization.

The protein resides in the virion. It is found in the host nucleus. Its subcellular location is the host cytoplasm. The protein localises to the host perinuclear region. It localises to the secreted. The protein resides in the virion membrane. It is found in the host endoplasmic reticulum membrane. Its subcellular location is the host mitochondrion. The catalysed reaction is Selective hydrolysis of -Xaa-Xaa-|-Yaa- bonds in which each of the Xaa can be either Arg or Lys and Yaa can be either Ser or Ala.. The enzyme catalyses RNA(n) + a ribonucleoside 5'-triphosphate = RNA(n+1) + diphosphate. It carries out the reaction a ribonucleoside 5'-triphosphate + H2O = a ribonucleoside 5'-diphosphate + phosphate + H(+). It catalyses the reaction ATP + H2O = ADP + phosphate + H(+). The catalysed reaction is a 5'-end (5'-triphosphoguanosine)-ribonucleoside in mRNA + S-adenosyl-L-methionine = a 5'-end (N(7)-methyl 5'-triphosphoguanosine)-ribonucleoside in mRNA + S-adenosyl-L-homocysteine. The enzyme catalyses a 5'-end (N(7)-methyl 5'-triphosphoguanosine)-ribonucleoside in mRNA + S-adenosyl-L-methionine = a 5'-end (N(7)-methyl 5'-triphosphoguanosine)-(2'-O-methyl-ribonucleoside) in mRNA + S-adenosyl-L-homocysteine + H(+). Plays a role in virus budding by binding to the cell membrane and gathering the viral RNA into a nucleocapsid that forms the core of a mature virus particle. During virus entry, may induce genome penetration into the host cytoplasm after hemifusion induced by the surface proteins. Can migrate to the cell nucleus where it modulates host functions. Overcomes the anti-viral effects of host EXOC1 by sequestering and degrading the latter through the proteasome degradation pathway. Functionally, inhibits RNA silencing by interfering with host Dicer. Its function is as follows. Prevents premature fusion activity of envelope proteins in trans-Golgi by binding to envelope protein E at pH6.0. After virion release in extracellular space, gets dissociated from E dimers. In terms of biological role, acts as a chaperone for envelope protein E during intracellular virion assembly by masking and inactivating envelope protein E fusion peptide. prM is the only viral peptide matured by host furin in the trans-Golgi network probably to avoid catastrophic activation of the viral fusion activity in acidic Golgi compartment prior to virion release. prM-E cleavage is inefficient, and many virions are only partially matured. These uncleaved prM would play a role in immune evasion. May play a role in virus budding. Exerts cytotoxic effects by activating a mitochondrial apoptotic pathway through M ectodomain. May display a viroporin activity. Functionally, binds to host cell surface receptor and mediates fusion between viral and cellular membranes. Envelope protein is synthesized in the endoplasmic reticulum in the form of heterodimer with protein prM. They play a role in virion budding in the ER, and the newly formed immature particle is covered with 60 spikes composed of heterodimer between precursor prM and envelope protein E. The virion is transported to the Golgi apparatus where the low pH causes dissociation of PrM-E heterodimers and formation of E homodimers. prM-E cleavage is inefficient, and many virions are only partially matured. These uncleaved prM would play a role in immune evasion. Its function is as follows. Involved in immune evasion, pathogenesis and viral replication. Once cleaved off the polyprotein, is targeted to three destinations: the viral replication cycle, the plasma membrane and the extracellular compartment. Essential for viral replication. Required for formation of the replication complex and recruitment of other non-structural proteins to the ER-derived membrane structures. Excreted as a hexameric lipoparticle that plays a role against host immune response. Antagonizing the complement function. Binds to the host macrophages and dendritic cells. Inhibits signal transduction originating from Toll-like receptor 3 (TLR3). In terms of biological role, disrupts the host endothelial glycocalyx layer of host pulmonary microvascular endothelial cells, inducing degradation of sialic acid and shedding of heparan sulfate proteoglycans. NS1 induces expression of sialidases, heparanase, and activates cathepsin L, which activates heparanase via enzymatic cleavage. These effects are probably linked to the endothelial hyperpermeability observed in severe dengue disease. Component of the viral RNA replication complex that functions in virion assembly and antagonizes the host immune response. Functionally, required cofactor for the serine protease function of NS3. May have membrane-destabilizing activity and form viroporins. Its function is as follows. Displays three enzymatic activities: serine protease, NTPase and RNA helicase. NS3 serine protease, in association with NS2B, performs its autocleavage and cleaves the polyprotein at dibasic sites in the cytoplasm: C-prM, NS2A-NS2B, NS2B-NS3, NS3-NS4A, NS4A-2K and NS4B-NS5. NS3 RNA helicase binds RNA and unwinds dsRNA in the 3' to 5' direction. In terms of biological role, regulates the ATPase activity of the NS3 helicase activity. NS4A allows NS3 helicase to conserve energy during unwinding. Plays a role in the inhibition of the host innate immune response. Interacts with host MAVS and thereby prevents the interaction between RIGI and MAVS. In turn, IFN-beta production is impaired. Interacts with host AUP1 which mediates induction of lipophagy in host cells and facilitates production of virus progeny particles. Functions as a signal peptide for NS4B and is required for the interferon antagonism activity of the latter. Functionally, induces the formation of ER-derived membrane vesicles where the viral replication takes place. Inhibits interferon (IFN)-induced host STAT1 phosphorylation and nuclear translocation, thereby preventing the establishment of cellular antiviral state by blocking the IFN-alpha/beta pathway. Its function is as follows. Replicates the viral (+) and (-) RNA genome, and performs the capping of genomes in the cytoplasm. NS5 methylates viral RNA cap at guanine N-7 and ribose 2'-O positions. Besides its role in RNA genome replication, also prevents the establishment of cellular antiviral state by blocking the interferon-alpha/beta (IFN-alpha/beta) signaling pathway. Inhibits host TYK2 and STAT2 phosphorylation, thereby preventing activation of JAK-STAT signaling pathway. May reduce immune responses by preventing the recruitment of the host PAF1 complex to interferon-responsive genes. This Dengue virus type 4 (strain Singapore/8976/1995) (DENV-4) protein is Genome polyprotein.